Consider the following 356-residue polypeptide: MSKLWRRGSTSGAMEAPEPGEALELSLAGAHGHGVHKKKHKKHKKKHKKKHHQEEDAGPTQPSPAKPQLKLKIKLGGQVLGTKSVPTFTVIPEGPRSPSPLMVVDNEEEPMEGVPLEQYRAWLDEDSNLSPSPLRDLSGGLGGQEEEEEQRWLDALEKGELDDNGDLKKEINERLLTARQRALLQKARSQPSPMLPLPVAEGCPPPALTEEMLLKREERARKRRLQAARRAEEHKNQTIERLTKTAATSGRGGRGGARGERRGGRAAAPAPMVRYCSGAQGSTLSFPPGVPAPTAVSQRPSPSGPPPRCSVPGCPHPRRYACSRTGQALCSLQCYRINLQMRLGGPEGPGSPLLAT.

The disordered stretch occupies residues 1–71; sequence MSKLWRRGST…PSPAKPQLKL (71 aa). Residues 33 to 51 are compositionally biased toward basic residues; it reads HGVHKKKHKKHKKKHKKKH. Residues serine 97, serine 99, serine 127, serine 130, and serine 132 each carry the phosphoserine modification. The interval 124-150 is disordered; it reads DEDSNLSPSPLRDLSGGLGGQEEEEEQ. A coiled-coil region spans residues 213 to 245; that stretch reads LLKREERARKRRLQAARRAEEHKNQTIERLTKT. Disordered regions lie at residues 246–269 and 286–310; these read AATS…AAAP and FPPG…PRCS. An HIT-type zinc finger spans residues 305–336; that stretch reads PPPRCSVPGCPHPRRYACSRTGQALCSLQCYR.

Component of the chromatin remodeling INO80 complex; specifically part of a complex module associated with the helicase ATP-binding and the helicase C-terminal domain of INO80. Interacts with RP9.

It is found in the nucleus. Its subcellular location is the nucleolus. Functionally, induces growth and cell cycle arrests at the G1 phase of the cell cycle. Proposed core component of the chromatin remodeling INO80 complex which is involved in transcriptional regulation, DNA replication and probably DNA repair. The protein is INO80 complex subunit B (INO80B) of Homo sapiens (Human).